A 124-amino-acid chain; its full sequence is Large ribosomal subunit protein uL18 (124 aa).

The protein belongs to the universal ribosomal protein uL18 family. As to quaternary structure, part of the 50S ribosomal subunit; part of the 5S rRNA/L5/L18/L25 subcomplex. Contacts the 5S and 23S rRNAs.

This is one of the proteins that bind and probably mediate the attachment of the 5S RNA into the large ribosomal subunit, where it forms part of the central protuberance. This Thermomicrobium roseum (strain ATCC 27502 / DSM 5159 / P-2) protein is Large ribosomal subunit protein uL18.